We begin with the raw amino-acid sequence, 324 residues long: Anthranilate phosphoribosyltransferase (324 aa).

5-phospho-alpha-D-ribose 1-diphosphate-binding positions include Gly72, 75–76 (GD), Ser80, 82–85 (NVST), 99–107 (KHGNVSITS), and Ser111. Gly72 contributes to the anthranilate binding site. Ser84 provides a ligand contact to Mg(2+). Asn102 is a binding site for anthranilate. Anthranilate is bound at residue Arg157. Mg(2+)-binding residues include Asp215 and Glu216.

Belongs to the anthranilate phosphoribosyltransferase family. As to quaternary structure, homodimer. Requires Mg(2+) as cofactor.

The enzyme catalyses N-(5-phospho-beta-D-ribosyl)anthranilate + diphosphate = 5-phospho-alpha-D-ribose 1-diphosphate + anthranilate. The protein operates within amino-acid biosynthesis; L-tryptophan biosynthesis; L-tryptophan from chorismate: step 2/5. Its function is as follows. Catalyzes the transfer of the phosphoribosyl group of 5-phosphorylribose-1-pyrophosphate (PRPP) to anthranilate to yield N-(5'-phosphoribosyl)-anthranilate (PRA). This chain is Anthranilate phosphoribosyltransferase, found in Pyrococcus abyssi (strain GE5 / Orsay).